We begin with the raw amino-acid sequence, 89 residues long: Small ribosomal subunit protein uS17 (89 aa).

This sequence belongs to the universal ribosomal protein uS17 family. As to quaternary structure, part of the 30S ribosomal subunit.

One of the primary rRNA binding proteins, it binds specifically to the 5'-end of 16S ribosomal RNA. In Xylella fastidiosa (strain 9a5c), this protein is Small ribosomal subunit protein uS17.